Here is a 377-residue protein sequence, read N- to C-terminus: Carbamoyl phosphate synthase small chain (377 aa).

Residues 1–186 (MNTPALLVLA…LGKGFVTPDK (186 aa)) form a CPSase region. L-glutamine-binding residues include Ser-47, Gly-238, and Gly-240. Positions 190-377 (HVVAYDFGVK…IGNMKAAKQA (188 aa)) constitute a Glutamine amidotransferase type-1 domain. The active-site Nucleophile is the Cys-266. L-glutamine-binding residues include Leu-267, Gln-270, Asn-308, Gly-310, and Phe-311. Residues His-350 and Glu-352 contribute to the active site.

This sequence belongs to the CarA family. As to quaternary structure, composed of two chains; the small (or glutamine) chain promotes the hydrolysis of glutamine to ammonia, which is used by the large (or ammonia) chain to synthesize carbamoyl phosphate. Tetramer of heterodimers (alpha,beta)4.

The enzyme catalyses hydrogencarbonate + L-glutamine + 2 ATP + H2O = carbamoyl phosphate + L-glutamate + 2 ADP + phosphate + 2 H(+). It carries out the reaction L-glutamine + H2O = L-glutamate + NH4(+). It functions in the pathway amino-acid biosynthesis; L-arginine biosynthesis; carbamoyl phosphate from bicarbonate: step 1/1. It participates in pyrimidine metabolism; UMP biosynthesis via de novo pathway; (S)-dihydroorotate from bicarbonate: step 1/3. Small subunit of the glutamine-dependent carbamoyl phosphate synthetase (CPSase). CPSase catalyzes the formation of carbamoyl phosphate from the ammonia moiety of glutamine, carbonate, and phosphate donated by ATP, constituting the first step of 2 biosynthetic pathways, one leading to arginine and/or urea and the other to pyrimidine nucleotides. The small subunit (glutamine amidotransferase) binds and cleaves glutamine to supply the large subunit with the substrate ammonia. The sequence is that of Carbamoyl phosphate synthase small chain from Neisseria gonorrhoeae.